The chain runs to 307 residues: Homoserine O-acetyltransferase (307 aa).

Catalysis depends on cysteine 142, which acts as the Acyl-thioester intermediate. 2 residues coordinate substrate: lysine 163 and serine 192. The active-site Proton acceptor is histidine 235. The active site involves glutamate 237. Position 249 (arginine 249) interacts with substrate.

This sequence belongs to the MetA family.

The protein resides in the cytoplasm. The enzyme catalyses L-homoserine + acetyl-CoA = O-acetyl-L-homoserine + CoA. It functions in the pathway amino-acid biosynthesis; L-methionine biosynthesis via de novo pathway; O-acetyl-L-homoserine from L-homoserine: step 1/1. In terms of biological role, transfers an acetyl group from acetyl-CoA to L-homoserine, forming acetyl-L-homoserine. In Rhizobium leguminosarum bv. trifolii (strain WSM2304), this protein is Homoserine O-acetyltransferase.